Here is a 99-residue protein sequence, read N- to C-terminus: Integration host factor subunit alpha (99 aa).

The tract at residues 52–73 is disordered; it reads FGNFTLRDKPQRPGRNPKTGEE.

It belongs to the bacterial histone-like protein family. Heterodimer of an alpha and a beta chain.

Its function is as follows. This protein is one of the two subunits of integration host factor, a specific DNA-binding protein that functions in genetic recombination as well as in transcriptional and translational control. This is Integration host factor subunit alpha from Legionella pneumophila subsp. pneumophila (strain Philadelphia 1 / ATCC 33152 / DSM 7513).